Consider the following 254-residue polypeptide: Alcohol dehydrogenase (254 aa).

Position 10-33 (10-33 (FVAGLGGIGFDTSREIVKSGPKNL)) interacts with NAD(+). S138 contributes to the substrate binding site. Catalysis depends on Y151, which acts as the Proton acceptor.

Belongs to the short-chain dehydrogenases/reductases (SDR) family. Homodimer.

It carries out the reaction a primary alcohol + NAD(+) = an aldehyde + NADH + H(+). The enzyme catalyses a secondary alcohol + NAD(+) = a ketone + NADH + H(+). The protein is Alcohol dehydrogenase (Adh) of Drosophila mayaguana (Fruit fly).